The primary structure comprises 64 residues: MEIVVDAIYEKGVLKLKKSINLPEGCEVEIKIIPKKISEKTFGILKLSDKEIKEILEEIENGGE.

This sequence belongs to the UPF0165 family.

In terms of biological role, possibly the antitoxin component of a type II toxin-antitoxin (TA) system. Its cognate toxin is VapC2 (Potential). In Methanocaldococcus jannaschii (strain ATCC 43067 / DSM 2661 / JAL-1 / JCM 10045 / NBRC 100440) (Methanococcus jannaschii), this protein is Putative antitoxin MJ0975 (vapB2).